Consider the following 265-residue polypeptide: S-adenosylmethionine decarboxylase proenzyme (265 aa).

Catalysis depends on Ser114, which acts as the Schiff-base intermediate with substrate; via pyruvic acid. A Pyruvic acid (Ser); by autocatalysis modification is found at Ser114. The active-site Proton acceptor; for processing activity is His119. Cys142 (proton donor; for catalytic activity) is an active-site residue.

This sequence belongs to the prokaryotic AdoMetDC family. Type 2 subfamily. In terms of assembly, heterooctamer of four alpha and four beta chains arranged as a tetramer of alpha/beta heterodimers. Pyruvate is required as a cofactor. Post-translationally, is synthesized initially as an inactive proenzyme. Formation of the active enzyme involves a self-maturation process in which the active site pyruvoyl group is generated from an internal serine residue via an autocatalytic post-translational modification. Two non-identical subunits are generated from the proenzyme in this reaction, and the pyruvate is formed at the N-terminus of the alpha chain, which is derived from the carboxyl end of the proenzyme. The post-translation cleavage follows an unusual pathway, termed non-hydrolytic serinolysis, in which the side chain hydroxyl group of the serine supplies its oxygen atom to form the C-terminus of the beta chain, while the remainder of the serine residue undergoes an oxidative deamination to produce ammonia and the pyruvoyl group blocking the N-terminus of the alpha chain.

The enzyme catalyses S-adenosyl-L-methionine + H(+) = S-adenosyl 3-(methylsulfanyl)propylamine + CO2. Its pathway is amine and polyamine biosynthesis; S-adenosylmethioninamine biosynthesis; S-adenosylmethioninamine from S-adenosyl-L-methionine: step 1/1. Catalyzes the decarboxylation of S-adenosylmethionine to S-adenosylmethioninamine (dcAdoMet), the propylamine donor required for the synthesis of the polyamines spermine and spermidine from the diamine putrescine. This Buchnera aphidicola subsp. Acyrthosiphon pisum (strain APS) (Acyrthosiphon pisum symbiotic bacterium) protein is S-adenosylmethionine decarboxylase proenzyme.